The primary structure comprises 436 residues: Phosphoribosylamine--glycine ligase (436 aa).

The 213-residue stretch at 106 to 318 (RKLFEDYDIE…LADVCQAIVD (213 aa)) folds into the ATP-grasp domain. Residue 133–196 (LDDFDRDVVV…EERLIGEEFT (64 aa)) participates in ATP binding. 3 residues coordinate Mg(2+): Gln276, Glu288, and Asn290. Residues Gln276, Glu288, and Asn290 each contribute to the Mn(2+) site.

This sequence belongs to the GARS family. Mg(2+) is required as a cofactor. Requires Mn(2+) as cofactor.

It carries out the reaction 5-phospho-beta-D-ribosylamine + glycine + ATP = N(1)-(5-phospho-beta-D-ribosyl)glycinamide + ADP + phosphate + H(+). Its pathway is purine metabolism; IMP biosynthesis via de novo pathway; N(1)-(5-phospho-D-ribosyl)glycinamide from 5-phospho-alpha-D-ribose 1-diphosphate: step 2/2. This chain is Phosphoribosylamine--glycine ligase, found in Methanobrevibacter smithii (strain ATCC 35061 / DSM 861 / OCM 144 / PS).